The primary structure comprises 169 residues: S-ribosylhomocysteine lyase (169 aa).

Fe cation is bound by residues histidine 54, histidine 58, and cysteine 129.

Belongs to the LuxS family. As to quaternary structure, homodimer. It depends on Fe cation as a cofactor.

The enzyme catalyses S-(5-deoxy-D-ribos-5-yl)-L-homocysteine = (S)-4,5-dihydroxypentane-2,3-dione + L-homocysteine. Functionally, involved in the synthesis of autoinducer 2 (AI-2) which is secreted by bacteria and is used to communicate both the cell density and the metabolic potential of the environment. The regulation of gene expression in response to changes in cell density is called quorum sensing. Catalyzes the transformation of S-ribosylhomocysteine (RHC) to homocysteine (HC) and 4,5-dihydroxy-2,3-pentadione (DPD). The chain is S-ribosylhomocysteine lyase from Glaesserella parasuis serovar 5 (strain SH0165) (Haemophilus parasuis).